A 396-amino-acid polypeptide reads, in one-letter code: Acetate kinase (396 aa).

A Mg(2+)-binding site is contributed by Asn-8. An ATP-binding site is contributed by Lys-15. Arg-89 contributes to the substrate binding site. Residue Asp-146 is the Proton donor/acceptor of the active site. ATP-binding positions include 206 to 210 (HIGNG), 283 to 285 (DMR), and 331 to 335 (GVGEN). Glu-383 serves as a coordination point for Mg(2+).

It belongs to the acetokinase family. In terms of assembly, homodimer. Mg(2+) serves as cofactor. The cofactor is Mn(2+).

It is found in the cytoplasm. The enzyme catalyses acetate + ATP = acetyl phosphate + ADP. It functions in the pathway metabolic intermediate biosynthesis; acetyl-CoA biosynthesis; acetyl-CoA from acetate: step 1/2. Functionally, catalyzes the formation of acetyl phosphate from acetate and ATP. Can also catalyze the reverse reaction. The chain is Acetate kinase from Streptococcus pneumoniae (strain Hungary19A-6).